A 186-amino-acid chain; its full sequence is Translation initiation factor IF-3 (186 aa).

The disordered stretch occupies residues 1–20 (MINRSAGKDRDRSRSGDKEL).

The protein belongs to the IF-3 family. In terms of assembly, monomer.

It is found in the cytoplasm. Functionally, IF-3 binds to the 30S ribosomal subunit and shifts the equilibrium between 70S ribosomes and their 50S and 30S subunits in favor of the free subunits, thus enhancing the availability of 30S subunits on which protein synthesis initiation begins. The polypeptide is Translation initiation factor IF-3 (Borrelia hermsii (strain HS1 / DAH)).